We begin with the raw amino-acid sequence, 440 residues long: MKERILQEIKTRVNRKSWELWFSSFDVKSIEGNKVVFSVGNLFIKEWLEKKYYSVLSKAVKVVLGNDATFEITYEAFEPHSSYSEPLVKKRAVLLTPLNPDYTFENFVVGPGNSFAYHAALEVAKHPGRYNPLFIYGGVGLGKTHLLQSIGNYVVQNEPDLRVMYITSEKFLNDLVDSMKEGKLNEFREKYRKKVDILLIDDVQFLIGKTGVQTELFHTFNELHDSGKQIVICSDREPQKLSEFQDRLVSRFQMGLVAKLEPPDEETRKSIARKMLEIEHGELPEEVLNFVAENVDDNLRRLRGAIIKLLVYKETTGKEVDLKEAILLLKDFIKPNRVKAMDPIDELIEIVAKVTGVPREEILSNSRNVKALTARRIGMYVAKNYLKSSLRTIAEKFNRSHPVVVDSVKKVKDSLLKGNKQLKALIDEVIGEISRRALSG.

Positions 1–69 are domain I, interacts with DnaA modulators; the sequence is MKERILQEIK…VKVVLGNDAT (69 aa). The tract at residues 69–96 is domain II; it reads TFEITYEAFEPHSSYSEPLVKKRAVLLT. A domain III, AAA+ region region spans residues 97–313; sequence PLNPDYTFEN…GAIIKLLVYK (217 aa). The ADP site is built by Val108, Asn113, Gly140, Leu141, Gly142, Lys143, Thr144, His145, and Arg300. Position 140 (Gly140) interacts with ATP. Gly142, Lys143, and Thr144 together coordinate ATP. Thr144 contacts Mg(2+). The interval 314–440 is domain IV, binds dsDNA; that stretch reads ETTGKEVDLK…GEISRRALSG (127 aa).

This sequence belongs to the DnaA family. In terms of assembly, oligomerizes as a right-handed, spiral filament on DNA at oriC.

The protein resides in the cytoplasm. Its function is as follows. Plays an essential role in the initiation and regulation of chromosomal replication. ATP-DnaA binds to the origin of replication (oriC) to initiate formation of the DNA replication initiation complex once per cell cycle. Binds the DnaA box (a 9 base pair repeat at the origin) and separates the double-stranded (ds)DNA. Forms a right-handed helical filament on oriC DNA; dsDNA binds to the exterior of the filament while single-stranded (ss)DNA is stabiized in the filament's interior. The ATP-DnaA-oriC complex binds and stabilizes one strand of the AT-rich DNA unwinding element (DUE), permitting loading of DNA polymerase. After initiation quickly degrades to an ADP-DnaA complex that is not apt for DNA replication. Binds acidic phospholipids. The DnaA box consensus is 5'-[ATC][AT]AC[CT]TACCA[CT][CTA]-3' in this bacterium. Mutagenesis of residues that line the central pore blocks dsDNA separation. The protein is Chromosomal replication initiator protein DnaA of Thermotoga maritima (strain ATCC 43589 / DSM 3109 / JCM 10099 / NBRC 100826 / MSB8).